Reading from the N-terminus, the 474-residue chain is L-arabinose isomerase (474 aa).

E306, E331, H348, and H447 together coordinate Mn(2+).

This sequence belongs to the arabinose isomerase family. Requires Mn(2+) as cofactor.

The catalysed reaction is beta-L-arabinopyranose = L-ribulose. Its pathway is carbohydrate degradation; L-arabinose degradation via L-ribulose; D-xylulose 5-phosphate from L-arabinose (bacterial route): step 1/3. Its function is as follows. Catalyzes the conversion of L-arabinose to L-ribulose. This chain is L-arabinose isomerase, found in Oceanobacillus iheyensis (strain DSM 14371 / CIP 107618 / JCM 11309 / KCTC 3954 / HTE831).